The sequence spans 607 residues: Dolichyl-diphosphooligosaccharide--protein glycosyltransferase subunit 1 (607 aa).

Residues 1–24 form the signal peptide; that stretch reads MEVPTARLLLLLLLGAWAPAPESA. The Lumenal portion of the chain corresponds to 25 to 434; sequence SPEAPLLVNE…VVHYTFNKVL (410 aa). The residue at position 187 (K187) is an N6-acetyllysine. N299 carries an N-linked (GlcNAc...) asparagine glycan. Residues 435–455 form a helical membrane-spanning segment; the sequence is MLQEPLLVVAAFYILFFTVII. The Cytoplasmic segment spans residues 456-607; that stretch reads YVRLDFSITK…TKIDHILDAL (152 aa). K538 carries the post-translational modification N6-acetyllysine; alternate. K538 participates in a covalent cross-link: Glycyl lysine isopeptide (Lys-Gly) (interchain with G-Cter in SUMO2); alternate.

This sequence belongs to the OST1 family. In terms of assembly, component of the oligosaccharyltransferase (OST) complex. OST exists in two different complex forms which contain common core subunits RPN1, RPN2, OST48, OST4, DAD1 and TMEM258, either STT3A or STT3B as catalytic subunits, and form-specific accessory subunits. STT3A complex assembly occurs through the formation of 3 subcomplexes. Subcomplex 1 contains RPN1 and TMEM258, subcomplex 2 contains the STT3A-specific subunits STT3A, DC2/OSTC, and KCP2 as well as the core subunit OST4, and subcomplex 3 contains RPN2, DAD1, and OST48. The STT3A complex can form stable complexes with the Sec61 complex or with both the Sec61 and TRAP complexes. Interacts with TMEM35A/NACHO. Post-translationally, ubiquitinated by the ECS(ASB11) complex. Ufmylated by UFL1 in response to endoplasmic reticulum stress, promoting reticulophagy of endoplasmic reticulum sheets.

It localises to the endoplasmic reticulum membrane. The protein operates within protein modification; protein glycosylation. Its function is as follows. Subunit of the oligosaccharyl transferase (OST) complex that catalyzes the initial transfer of a defined glycan (Glc(3)Man(9)GlcNAc(2) in eukaryotes) from the lipid carrier dolichol-pyrophosphate to an asparagine residue within an Asn-X-Ser/Thr consensus motif in nascent polypeptide chains, the first step in protein N-glycosylation. N-glycosylation occurs cotranslationally and the complex associates with the Sec61 complex at the channel-forming translocon complex that mediates protein translocation across the endoplasmic reticulum (ER). All subunits are required for a maximal enzyme activity. The chain is Dolichyl-diphosphooligosaccharide--protein glycosyltransferase subunit 1 from Canis lupus familiaris (Dog).